The primary structure comprises 428 residues: 2,3-bisphosphoglycerate-independent phosphoglycerate mutase 2 (428 aa).

The protein belongs to the BPG-independent phosphoglycerate mutase family. A-PGAM subfamily.

It carries out the reaction (2R)-2-phosphoglycerate = (2R)-3-phosphoglycerate. It participates in carbohydrate degradation; glycolysis; pyruvate from D-glyceraldehyde 3-phosphate: step 3/5. Catalyzes the interconversion of 2-phosphoglycerate and 3-phosphoglycerate. The sequence is that of 2,3-bisphosphoglycerate-independent phosphoglycerate mutase 2 (apgM2) from Methanocaldococcus jannaschii (strain ATCC 43067 / DSM 2661 / JAL-1 / JCM 10045 / NBRC 100440) (Methanococcus jannaschii).